A 162-amino-acid chain; its full sequence is UPF0114 protein VCM66_0196 (162 aa).

4 helical membrane passes run 15-35 (IMAP…IKFF), 53-73 (LILV…IVMV), 109-126 (VSAS…KVFM), and 136-156 (IKWY…MGYL).

This sequence belongs to the UPF0114 family.

It is found in the cell membrane. The chain is UPF0114 protein VCM66_0196 from Vibrio cholerae serotype O1 (strain M66-2).